The following is a 1561-amino-acid chain: Formin-E (1561 aa).

Low complexity predominate over residues 1–28 (MDNHSSSSNPSSLSSSSSSSSSSSSFLS). Disordered regions lie at residues 1-63 (MDNH…EEKP), 77-187 (EEEE…GKLS), 211-279 (PIIV…SSED), and 305-365 (ILRS…NLNY). Positions 29–51 (DHVKKEEQNGLDTIKEEIENKIE) are enriched in basic and acidic residues. The stretch at 32-85 (KKEEQNGLDTIKEEIENKIENEEEEEKIEEKPIEKVEEEKIIVQKEEEEKIEEE) forms a coiled coil. Over residues 80–89 (EKIEEEPIEK) the composition is skewed to acidic residues. Residues 103-120 (DNINTTVEAKTLETSTEP) are compositionally biased toward polar residues. Positions 158–208 (EQQEQQEKQKEETKPSIREEVKEKIKGKLSEIKEEIKDIKEEIKHVIREEV) form a coiled coil. Positions 162–187 (QQEKQKEETKPSIREEVKEKIKGKLS) are enriched in basic and acidic residues. The segment covering 220–229 (SPPPPPPPPS) has biased composition (pro residues). The span at 230–258 (ITVQSSSPVSSQISSPVSSPVSSPKPSVT) shows a compositional bias: low complexity. Residues 305–320 (ILRSKSSPNPGANNPN) are compositionally biased toward polar residues. The segment covering 326 to 365 (NNSSSSSSSNNNSDNNNNSDNNSNNNNINNNNSSSNNLNY) has biased composition (low complexity). A Phorbol-ester/DAG-type zinc finger spans residues 379-427 (YHDFKIHRGTSSCVYCGENTRLWSTSYKCFFCGVVCHKKCLDSMNTIPC). Over residues 465–534 (PSSITNSSSK…TSISSPPIAS (70 aa)) the composition is skewed to low complexity. Residues 465–549 (PSSITNSSSK…PLLQQQQQQQ (85 aa)) form a disordered region. Positions 541 to 573 (LLQQQQQQQQQQQQQQQQQQQQQQQQQQISTTQ) form a coiled coil. One can recognise a GBD/FH3 domain in the interval 581–929 (SEKPDDDMIN…QISLHKGGFE (349 aa)). A coiled-coil region spans residues 952–989 (LNRKLGELEKQNIDKAMKIQEQDINIKSLLDLLKQLKD). Disordered regions lie at residues 1009–1092 (MEPP…VPKP), 1466–1508 (EEKR…SDED), and 1526–1561 (RQAKGRRRTTHQIATSKMISNNLDPSKILPTSPNKN). Over residues 1017-1033 (SVKSPDDPNNAAPIVVA) the composition is skewed to low complexity. The FH1 domain maps to 1019–1081 (KSPDDPNNAA…LGAKKPPAGV (63 aa)). Positions 1034–1070 (PIPPPPPPISGAPPPPPPPPPPMKGGAGPPPPPPPPG) are enriched in pro residues. A compositionally biased stretch (low complexity) spans 1071 to 1081 (KLGAKKPPAGV). The 390-residue stretch at 1086–1475 (PPKVPKPSHP…EEKRLQQKQQ (390 aa)) folds into the FH2 domain. Positions 1398–1491 (LATASTEVEK…RKLTTSNESA (94 aa)) form a coiled coil. The segment covering 1466–1481 (EEKRLQQKQQRQERAV) has biased composition (basic and acidic residues). 2 stretches are compositionally biased toward polar residues: residues 1484-1498 (LTTSNESASASPNHA) and 1536-1561 (HQIATSKMISNNLDPSKILPTSPNKN). The region spanning 1488–1518 (NESASASPNHAKSTDDKSDEDDDIVNDLLMA) is the DAD domain.

It belongs to the formin homology family. Diaphanous subfamily. Interacts (via GBD/FH3 domain) with activated Rho-GTPases.

Its function is as follows. Formins play an important role in the nucleation of actin and the formation of linear actin filaments. The polypeptide is Formin-E (forE) (Dictyostelium discoideum (Social amoeba)).